Consider the following 204-residue polypeptide: Small ribosomal subunit protein uS4 (204 aa).

Positions 93–156 constitute an S4 RNA-binding domain; sequence SRLSSVLYHS…AKIPVVVEAE (64 aa).

The protein belongs to the universal ribosomal protein uS4 family. Part of the 30S ribosomal subunit. Contacts protein S5. The interaction surface between S4 and S5 is involved in control of translational fidelity.

One of the primary rRNA binding proteins, it binds directly to 16S rRNA where it nucleates assembly of the body of the 30S subunit. Its function is as follows. With S5 and S12 plays an important role in translational accuracy. The polypeptide is Small ribosomal subunit protein uS4 (Wolbachia pipientis wMel).